A 317-amino-acid polypeptide reads, in one-letter code: Retinol dehydrogenase 16 (317 aa).

Residue 33–57 coordinates NAD(+); that stretch reads FITGCDSGFGTLLARQLDRRGMRVL. The Proton acceptor role is filled by Y176. The chain crosses the membrane as a helical span at residues 289 to 309; that stretch reads LFYLPLSYLPTFLVDALLYWT.

The protein belongs to the short-chain dehydrogenases/reductases (SDR) family. Homodimer. Not glycosylated.

It is found in the endoplasmic reticulum membrane. Its subcellular location is the microsome membrane. The enzyme catalyses all-trans-retinol--[retinol-binding protein] + NAD(+) = all-trans-retinal--[retinol-binding protein] + NADH + H(+). It carries out the reaction 9-cis-retinol + NAD(+) = 9-cis-retinal + NADH + H(+). It catalyses the reaction 11-cis-retinol + NAD(+) = 11-cis-retinal + NADH + H(+). The catalysed reaction is 13-cis-retinol + NAD(+) = 13-cis-retinal + NADH + H(+). The enzyme catalyses androsterone + NAD(+) = 5alpha-androstan-3,17-dione + NADH + H(+). It carries out the reaction 5alpha-androstane-3alpha,17beta-diol + NAD(+) = 17beta-hydroxy-5alpha-androstan-3-one + NADH + H(+). Its pathway is cofactor metabolism; retinol metabolism. Oxidoreductase with a preference for NAD. Oxidizes all-trans-retinol, 9-cis-retinol, 11-cis-retinol and 13-cis-retinol to the corresponding aldehydes. Has higher activity towards CRBP-bound retinol than with free retinol. Oxidizes 3-alpha-hydroxysteroids. Oxidizes androstanediol and androsterone to dihydrotestosterone and androstanedione. Can also catalyze the reverse reaction. This is Retinol dehydrogenase 16 from Mus musculus (Mouse).